The primary structure comprises 206 residues: Large ribosomal subunit protein uL3 (206 aa).

The tract at residues 116 to 149 is disordered; the sequence is GFQGAIKRHNQSRGPMSHGSRYHRRPGSMGPVAP.

The protein belongs to the universal ribosomal protein uL3 family. As to quaternary structure, part of the 50S ribosomal subunit. Forms a cluster with proteins L14 and L19.

One of the primary rRNA binding proteins, it binds directly near the 3'-end of the 23S rRNA, where it nucleates assembly of the 50S subunit. The chain is Large ribosomal subunit protein uL3 from Shouchella clausii (strain KSM-K16) (Alkalihalobacillus clausii).